Reading from the N-terminus, the 137-residue chain is Ribosome-binding factor A (137 aa).

The segment at 110-137 (RIQQEKEGATDDRDQNDSGEDATPHSND) is disordered. Over residues 112 to 125 (QQEKEGATDDRDQN) the composition is skewed to basic and acidic residues.

This sequence belongs to the RbfA family. As to quaternary structure, monomer. Binds 30S ribosomal subunits, but not 50S ribosomal subunits or 70S ribosomes.

The protein localises to the cytoplasm. One of several proteins that assist in the late maturation steps of the functional core of the 30S ribosomal subunit. Associates with free 30S ribosomal subunits (but not with 30S subunits that are part of 70S ribosomes or polysomes). Required for efficient processing of 16S rRNA. May interact with the 5'-terminal helix region of 16S rRNA. This chain is Ribosome-binding factor A, found in Rhodopirellula baltica (strain DSM 10527 / NCIMB 13988 / SH1).